The chain runs to 188 residues: GMP synthase [glutamine-hydrolyzing] subunit A (188 aa).

A Glutamine amidotransferase type-1 domain is found at 2 to 188; sequence KIYIIDNGGQ…FKNFIEKCRR (187 aa). Cysteine 79 serves as the catalytic Nucleophile. Active-site residues include histidine 166 and glutamate 168.

As to quaternary structure, heterodimer composed of a glutamine amidotransferase subunit (A) and a GMP-binding subunit (B).

It carries out the reaction XMP + L-glutamine + ATP + H2O = GMP + L-glutamate + AMP + diphosphate + 2 H(+). The protein operates within purine metabolism; GMP biosynthesis; GMP from XMP (L-Gln route): step 1/1. Its function is as follows. Catalyzes the synthesis of GMP from XMP. The chain is GMP synthase [glutamine-hydrolyzing] subunit A from Picrophilus torridus (strain ATCC 700027 / DSM 9790 / JCM 10055 / NBRC 100828 / KAW 2/3).